Here is a 201-residue protein sequence, read N- to C-terminus: GTP-binding protein ryh1 (201 aa).

18–25 (GEQSVGKT) contacts GTP. An Effector region motif is present at residues 40–48 (YQATIGIDF). GTP is bound by residues 66–70 (DTAGQ) and 124–127 (NKTD). 2 S-geranylgeranyl cysteine lipidation sites follow: C199 and C201. C201 is modified (cysteine methyl ester).

This sequence belongs to the small GTPase superfamily. Rab family.

Its subcellular location is the endosome membrane. The protein localises to the golgi apparatus membrane. It localises to the nucleus. The protein resides in the cytoplasm. It is found in the cytosol. In terms of biological role, has a role in retrograde traffricking of proteins from the endosome to the Golgi. Involved in protein transport to the plasma membrane. Involved in the secretory pathway where it has a role in acid phosphatase secretion. Required also in normal glycosylation trafficking pathways. The protein is GTP-binding protein ryh1 (ryh1) of Schizosaccharomyces pombe (strain 972 / ATCC 24843) (Fission yeast).